The primary structure comprises 424 residues: UDP-N-acetylglucosamine 1-carboxyvinyltransferase (424 aa).

Phosphoenolpyruvate is bound at residue 22 to 23 (KN). Position 95 (Arg95) interacts with UDP-N-acetyl-alpha-D-glucosamine. Catalysis depends on Cys119, which acts as the Proton donor. Cys119 carries the post-translational modification 2-(S-cysteinyl)pyruvic acid O-phosphothioketal. Residues 124–128 (RPVDQ), Asp311, and Ile333 each bind UDP-N-acetyl-alpha-D-glucosamine.

This sequence belongs to the EPSP synthase family. MurA subfamily.

It localises to the cytoplasm. It carries out the reaction phosphoenolpyruvate + UDP-N-acetyl-alpha-D-glucosamine = UDP-N-acetyl-3-O-(1-carboxyvinyl)-alpha-D-glucosamine + phosphate. The protein operates within cell wall biogenesis; peptidoglycan biosynthesis. Its function is as follows. Cell wall formation. Adds enolpyruvyl to UDP-N-acetylglucosamine. This Polaromonas sp. (strain JS666 / ATCC BAA-500) protein is UDP-N-acetylglucosamine 1-carboxyvinyltransferase.